A 234-amino-acid chain; its full sequence is Thiamine import ATP-binding protein ThiQ (234 aa).

The ABC transporter domain occupies 2–230 (LVLDDVQYTY…HPSKTLQAFV (229 aa)). Residue 32–39 (GPSGAGKS) coordinates ATP.

Belongs to the ABC transporter superfamily. Thiamine importer (TC 3.A.1.19.1) family. The complex is composed of two ATP-binding proteins (ThiQ), two transmembrane proteins (ThiP) and a solute-binding protein (ThiB).

It is found in the cell inner membrane. The catalysed reaction is thiamine(out) + ATP + H2O = thiamine(in) + ADP + phosphate + H(+). Its function is as follows. Part of the ABC transporter complex ThiBPQ involved in thiamine import. Responsible for energy coupling to the transport system. The chain is Thiamine import ATP-binding protein ThiQ from Vibrio parahaemolyticus serotype O3:K6 (strain RIMD 2210633).